Consider the following 370-residue polypeptide: 2-Hydroxyacid oxidase 1 (370 aa).

Residues Met1–Leu365 enclose the FMN hydroxy acid dehydrogenase domain. Tyr26 contacts glyoxylate. FMN-binding positions include Ala79–Ala81, Ser108, and Gln130. Tyr132 contacts glyoxylate. An FMN-binding site is contributed by Thr158. Arg167 contacts glyoxylate. Lys184 is subject to N6-succinyllysine. Phosphoserine occurs at positions 194 and 230. Positions 236 and 258 each coordinate FMN. His260 and Arg263 together coordinate glyoxylate. His260 (proton acceptor) is an active-site residue. Residues Asp291–Arg295 and Gly314–Arg315 contribute to the FMN site. Residues Ser368–Ile370 carry the Microbody targeting signal motif.

Belongs to the FMN-dependent alpha-hydroxy acid dehydrogenase family. In terms of assembly, homotetramer. It depends on FMN as a cofactor. Highly expressed in liver.

It is found in the peroxisome matrix. It carries out the reaction a (2S)-2-hydroxycarboxylate + O2 = a 2-oxocarboxylate + H2O2. The enzyme catalyses glycolate + O2 = glyoxylate + H2O2. It catalyses the reaction glyoxylate + O2 + H2O = oxalate + H2O2 + H(+). The catalysed reaction is 2-hydroxyhexadecanoate + O2 = 2-oxohexadecanoate + H2O2. It carries out the reaction 2-hydroxyoctanoate + O2 = 2-oxooctanoate + H2O2. Its pathway is amino-acid biosynthesis; glycine biosynthesis. Inhibited by its product oxalate. Inhibited by high concentrations of dichlorophenolindophenol (DCIP) in vitro. Functionally, broad substrate specificity (S)-2-hydroxy-acid oxidase that preferentially oxidizes glycolate. The glyoxylate produced by the oxidation of glycolate can then be utilized by alanine-glyoxylate aminotransferase for the peroxisomal synthesis of glycine; this pathway appears to be an important step for the detoxification of glyoxylate which, if allowed to accumulate, may be metabolized to oxalate with formation of kidney stones. Can also catalyze the oxidation of glyoxylate, and long chain hydroxyacids such as 2-hydroxyhexadecanoate and 2-hydroxyoctanoate, albeit with much lower catalytic efficiency. Active in vitro with the artificial electron acceptor 2,6-dichlorophenolindophenol (DCIP), but O2 is believed to be the physiological electron acceptor, leading to the production of H2O2. Is not active on L-lactate and 2-hydroxybutanoate. The protein is 2-Hydroxyacid oxidase 1 of Homo sapiens (Human).